The primary structure comprises 188 residues: Ribosome-recycling factor (188 aa).

Belongs to the RRF family.

The protein resides in the cytoplasm. In terms of biological role, responsible for the release of ribosomes from messenger RNA at the termination of protein biosynthesis. May increase the efficiency of translation by recycling ribosomes from one round of translation to another. The chain is Ribosome-recycling factor from Phenylobacterium zucineum (strain HLK1).